Consider the following 297-residue polypeptide: Putative movement protein (297 aa).

The disordered stretch occupies residues 249–297; that stretch reads STGLKIRDKSEDDNQRKHPVPLTSSNNKLKTLRVSTTPIVNGRSTSTSE. A compositionally biased stretch (basic and acidic residues) spans 253-264; the sequence is KIRDKSEDDNQR. Residues 270–297 show a composition bias toward polar residues; that stretch reads LTSSNNKLKTLRVSTTPIVNGRSTSTSE.

Its subcellular location is the host cell junction. It localises to the host plasmodesma. Transports viral genome to neighboring plant cells directly through plasmosdesmata, without any budding. The movement protein allows efficient cell to cell propagation, by bypassing the host cell wall barrier. The sequence is that of Putative movement protein (MP) from Citrus sinensis (Sweet orange).